Consider the following 114-residue polypeptide: MMYVIIGGAVGACLRFAVSECWLKFGKNAQLMTAVFVINISGCAMLGWILAKPLPEGIELLFISMLGGFTTFSTFCMEALELWRLKKRKQAMIYLVISIVGSLFGFLFGWNVRA.

4 consecutive transmembrane segments (helical) span residues 3 to 23 (YVII…ECWL), 31 to 51 (LMTA…WILA), 57 to 77 (GIEL…TFCM), and 92 to 112 (MIYL…GWNV). Gly67 and Thr70 together coordinate Na(+).

It belongs to the fluoride channel Fluc/FEX (TC 1.A.43) family.

The protein resides in the cell membrane. It carries out the reaction fluoride(in) = fluoride(out). Its activity is regulated as follows. Na(+) is not transported, but it plays an essential structural role and its presence is essential for fluoride channel function. Its function is as follows. Fluoride-specific ion channel. Important for reducing fluoride concentration in the cell, thus reducing its toxicity. In Shouchella clausii (strain KSM-K16) (Alkalihalobacillus clausii), this protein is Fluoride-specific ion channel FluC 2.